The primary structure comprises 106 residues: MSQKTVHDQDNALLLETGNTKVAPPPRYQVLLLNDDYTPMDFVIVVLQQFFAMDLKKATQVMLHVHTRGRGVCGFYTREVAESKVAQVNEFSRIHQHPLLCTMKQA.

A compositionally biased stretch (basic and acidic residues) spans Met1–Asp10. The disordered stretch occupies residues Met1–Ala23.

It belongs to the ClpS family. In terms of assembly, binds to the N-terminal domain of the chaperone ClpA.

In terms of biological role, involved in the modulation of the specificity of the ClpAP-mediated ATP-dependent protein degradation. The protein is ATP-dependent Clp protease adapter protein ClpS of Xylella fastidiosa (strain M23).